Here is a 90-residue protein sequence, read N- to C-terminus: DNA-directed RNA polymerase subunit omega (90 aa).

It belongs to the RNA polymerase subunit omega family. The RNAP catalytic core consists of 2 alpha, 1 beta, 1 beta' and 1 omega subunit. When a sigma factor is associated with the core the holoenzyme is formed, which can initiate transcription.

It carries out the reaction RNA(n) + a ribonucleoside 5'-triphosphate = RNA(n+1) + diphosphate. In terms of biological role, promotes RNA polymerase assembly. Latches the N- and C-terminal regions of the beta' subunit thereby facilitating its interaction with the beta and alpha subunits. The sequence is that of DNA-directed RNA polymerase subunit omega from Rhodopirellula baltica (strain DSM 10527 / NCIMB 13988 / SH1).